A 48-amino-acid polypeptide reads, in one-letter code: uncharacterized protein (48 aa).

The helical transmembrane segment at 18–38 (IIIKYWYIDLTITIFAFLILY) threads the bilayer.

Its subcellular location is the host membrane. This is an uncharacterized protein from Acidianus bottle-shaped virus (isolate Italy/Pozzuoli) (ABV).